A 215-amino-acid chain; its full sequence is Thymidylate kinase (215 aa).

Residue 13-20 (GLEGAGKS) participates in ATP binding.

Belongs to the thymidylate kinase family.

The catalysed reaction is dTMP + ATP = dTDP + ADP. Its function is as follows. Phosphorylation of dTMP to form dTDP in both de novo and salvage pathways of dTTP synthesis. In Shewanella frigidimarina (strain NCIMB 400), this protein is Thymidylate kinase.